We begin with the raw amino-acid sequence, 250 residues long: Small ribosomal subunit protein uS2 (250 aa).

It belongs to the universal ribosomal protein uS2 family.

The chain is Small ribosomal subunit protein uS2 from Polaromonas sp. (strain JS666 / ATCC BAA-500).